Consider the following 207-residue polypeptide: Probable GTP-binding protein EngB (207 aa).

In terms of domain architecture, EngB-type G spans 24-199 (GGYEVAFAGR…RAIVGAWLGL (176 aa)). Residues 32-39 (GRSNAGKS), 59-63 (GRTQQ), 77-80 (DLPG), 144-147 (TKAD), and 178-180 (YSG) contribute to the GTP site. 2 residues coordinate Mg(2+): serine 39 and threonine 61.

The protein belongs to the TRAFAC class TrmE-Era-EngA-EngB-Septin-like GTPase superfamily. EngB GTPase family. Mg(2+) is required as a cofactor.

Necessary for normal cell division and for the maintenance of normal septation. In Xanthomonas euvesicatoria pv. vesicatoria (strain 85-10) (Xanthomonas campestris pv. vesicatoria), this protein is Probable GTP-binding protein EngB.